The primary structure comprises 103 residues: NAD(P)H-quinone oxidoreductase subunit 4L, organellar chromatophore (103 aa).

3 helical membrane passes run 3–23 (IMLE…VWGL), 32–52 (VLMS…AFSN), and 63–83 (VFAI…LAIL).

Belongs to the complex I subunit 4L family. As to quaternary structure, NDH is composed of at least 16 different subunits, 5 of which are encoded in the nucleus.

It localises to the plastid. The protein localises to the organellar chromatophore thylakoid membrane. It carries out the reaction a plastoquinone + NADH + (n+1) H(+)(in) = a plastoquinol + NAD(+) + n H(+)(out). The catalysed reaction is a plastoquinone + NADPH + (n+1) H(+)(in) = a plastoquinol + NADP(+) + n H(+)(out). NDH shuttles electrons from NAD(P)H:plastoquinone, via FMN and iron-sulfur (Fe-S) centers, to quinones in the photosynthetic chain and possibly in a chloroplast respiratory chain. The immediate electron acceptor for the enzyme in this species is believed to be plastoquinone. Couples the redox reaction to proton translocation, and thus conserves the redox energy in a proton gradient. This is NAD(P)H-quinone oxidoreductase subunit 4L, organellar chromatophore from Paulinella chromatophora.